We begin with the raw amino-acid sequence, 363 residues long: MTSDIFFDPIWDVRMTDTSLRDGSHHKRHQFTKDEVGAIVAALDTAGVPVIEVTHGDGLGGSSFNYGFSKTPEQELIKLAAETAKEAKIAFLMLPGVGTKEDIKEAQNNGGSICRIATHCTEADVSIQHFGLARELGLETVGFLMMSHTIPPEKLAQQARIMADAGCQCVYVVDSAGALVLEGVRDRVAALVAELGDDAQVGFHGHENLGLGVANSVEAVRAGAKQIDGSCRRFGAGAGNAPVEALIGVFDKIGVKTGIDFFDIADAAEEVVAPAMPAECLLDRNALIMGYSGVYSSFLKHAIRQSERYGVPAHQLLHRAGQRKLIGGQEDQLIDIALEIKREMESDAAGRQSHAIGGSPRKG.

In terms of domain architecture, Pyruvate carboxyltransferase spans 13-265; it reads VRMTDTSLRD…KTGIDFFDIA (253 aa). 21-22 provides a ligand contact to substrate; sequence RD. Residue aspartate 22 participates in Mn(2+) binding. Residue histidine 25 is the Proton acceptor of the active site. 2 residues coordinate substrate: serine 175 and histidine 204. Residues histidine 204 and histidine 206 each contribute to the Mn(2+) site. Tyrosine 295 serves as a coordination point for substrate.

This sequence belongs to the 4-hydroxy-2-oxovalerate aldolase family.

The catalysed reaction is (S)-4-hydroxy-2-oxopentanoate = acetaldehyde + pyruvate. The chain is 4-hydroxy-2-oxovalerate aldolase 1 from Mycobacterium sp. (strain JLS).